A 393-amino-acid polypeptide reads, in one-letter code: tRNA(Met) cytidine acetate ligase (393 aa).

ATP-binding residues include Gly-81, Asn-142, and Arg-167.

It belongs to the TmcAL family.

Its subcellular location is the cytoplasm. The catalysed reaction is cytidine(34) in elongator tRNA(Met) + acetate + ATP = N(4)-acetylcytidine(34) in elongator tRNA(Met) + AMP + diphosphate. Functionally, catalyzes the formation of N(4)-acetylcytidine (ac(4)C) at the wobble position of elongator tRNA(Met), using acetate and ATP as substrates. First activates an acetate ion to form acetyladenylate (Ac-AMP) and then transfers the acetyl group to tRNA to form ac(4)C34. The sequence is that of tRNA(Met) cytidine acetate ligase from Bacillus thuringiensis subsp. konkukian (strain 97-27).